A 233-amino-acid polypeptide reads, in one-letter code: Octanoyltransferase (233 aa).

Positions 36-211 (DTTPDEIWLV…EFTRQLGYPT (176 aa)) constitute a BPL/LPL catalytic domain. Substrate contacts are provided by residues 75–82 (RGGQVTYH), 142–144 (SLG), and 155–157 (GLA). The active-site Acyl-thioester intermediate is the Cys173.

The protein belongs to the LipB family.

It localises to the cytoplasm. It carries out the reaction octanoyl-[ACP] + L-lysyl-[protein] = N(6)-octanoyl-L-lysyl-[protein] + holo-[ACP] + H(+). The protein operates within protein modification; protein lipoylation via endogenous pathway; protein N(6)-(lipoyl)lysine from octanoyl-[acyl-carrier-protein]: step 1/2. Catalyzes the transfer of endogenously produced octanoic acid from octanoyl-acyl-carrier-protein onto the lipoyl domains of lipoate-dependent enzymes. Lipoyl-ACP can also act as a substrate although octanoyl-ACP is likely to be the physiological substrate. The sequence is that of Octanoyltransferase from Yersinia pseudotuberculosis serotype O:3 (strain YPIII).